A 621-amino-acid polypeptide reads, in one-letter code: Anthranilate synthase alpha subunit 2, chloroplastic (621 aa).

Residues 1 to 87 (MSAVSISAVK…SEEQFTKFKK (87 aa)) constitute a chloroplast transit peptide.

The protein belongs to the anthranilate synthase component I family. In terms of assembly, heterotetramer consisting of two non-identical subunits: a beta subunit and a large alpha subunit.

The protein resides in the plastid. It localises to the chloroplast. The enzyme catalyses chorismate + L-glutamine = anthranilate + pyruvate + L-glutamate + H(+). It participates in amino-acid biosynthesis; L-tryptophan biosynthesis; L-tryptophan from chorismate: step 1/5. Feedback inhibition by tryptophan. In terms of biological role, part of a heterotetrameric complex that catalyzes the two-step biosynthesis of anthranilate, an intermediate in the biosynthesis of L-tryptophan. In the first step, the glutamine-binding beta subunit of anthranilate synthase (AS) provides the glutamine amidotransferase activity which generates ammonia as a substrate that, along with chorismate, is used in the second step, catalyzed by the large alpha subunit of AS to produce anthranilate. This is Anthranilate synthase alpha subunit 2, chloroplastic (ASA2) from Arabidopsis thaliana (Mouse-ear cress).